The following is a 304-amino-acid chain: tRNA-uridine aminocarboxypropyltransferase 1 (304 aa).

Serine 2 carries the post-translational modification N-acetylserine. Positions 206–209 (DSTW) match the DXTW motif.

The protein belongs to the TDD superfamily. DTWD1 family.

It is found in the nucleus. It catalyses the reaction a uridine in tRNA + S-adenosyl-L-methionine = a 3-[(3S)-3-amino-3-carboxypropyl]uridine in tRNA + S-methyl-5'-thioadenosine + H(+). Its function is as follows. Catalyzes the formation of 3-(3-amino-3-carboxypropyl)uridine (acp3U) at position 20 in the D-loop of several cytoplasmic tRNAs (acp3U(20)). In Homo sapiens (Human), this protein is tRNA-uridine aminocarboxypropyltransferase 1.